The chain runs to 711 residues: Polyribonucleotide nucleotidyltransferase (711 aa).

Mg(2+) contacts are provided by aspartate 486 and aspartate 492. The 60-residue stretch at 553-612 (PRIHTIKINPDKIKDVIGKGGSVIRALTEETGTTIEIEDDGTVKIAATDGEKAKHAIRRI) folds into the KH domain. An S1 motif domain is found at 622-690 (GRVYTGKVTR…RQGRIRLSIK (69 aa)). The segment at 689–711 (IKEATEQSQPAAAPEAPAAEQGE) is disordered. The segment covering 694–711 (EQSQPAAAPEAPAAEQGE) has biased composition (low complexity).

Belongs to the polyribonucleotide nucleotidyltransferase family. As to quaternary structure, component of the RNA degradosome, which is a multiprotein complex involved in RNA processing and mRNA degradation. Requires Mg(2+) as cofactor.

The protein localises to the cytoplasm. It carries out the reaction RNA(n+1) + phosphate = RNA(n) + a ribonucleoside 5'-diphosphate. Its function is as follows. Involved in mRNA degradation. Catalyzes the phosphorolysis of single-stranded polyribonucleotides processively in the 3'- to 5'-direction. The polypeptide is Polyribonucleotide nucleotidyltransferase (Shigella boydii serotype 4 (strain Sb227)).